Here is a 531-residue protein sequence, read N- to C-terminus: Polypyrimidine tract-binding protein 2 (531 aa).

Met-1 is subject to N-acetylmethionine. Phosphoserine occurs at positions 26 and 27. 2 consecutive RRM domains span residues 59 to 133 (RVLH…YSNH) and 181 to 257 (LRII…FSKL). Ser-308 carries the phosphoserine modification. 2 RRM domains span residues 338–412 (TVLL…LSKH) and 455–529 (ATLH…FSKS).

Monomer. Interacts with NOVA1; the interaction is direct. Identified in a mRNP complex, at least composed of DHX9, DDX3X, ELAVL1, HNRNPU, IGF2BP1, ILF3, PABPC1, PCBP2, PTBP2, STAU1, STAU2, SYNCRIP and YBX1. Part of a ternary complex containing KHSRP and HNRPH1. Interacts with NOVA2; the interaction is direct.

It localises to the nucleus. RNA-binding protein which binds to intronic polypyrimidine tracts and mediates negative regulation of exons splicing. May antagonize in a tissue-specific manner the ability of NOVA1 to activate exon selection. In addition to its function in pre-mRNA splicing, plays also a role in the regulation of translation. The polypeptide is Polypyrimidine tract-binding protein 2 (Rattus norvegicus (Rat)).